The primary structure comprises 237 residues: 1-(5-phosphoribosyl)-5-[(5-phosphoribosylamino)methylideneamino] imidazole-4-carboxamide isomerase (237 aa).

Residue D8 is the Proton acceptor of the active site. Residue D128 is the Proton donor of the active site.

This sequence belongs to the HisA/HisF family.

Its subcellular location is the cytoplasm. The catalysed reaction is 1-(5-phospho-beta-D-ribosyl)-5-[(5-phospho-beta-D-ribosylamino)methylideneamino]imidazole-4-carboxamide = 5-[(5-phospho-1-deoxy-D-ribulos-1-ylimino)methylamino]-1-(5-phospho-beta-D-ribosyl)imidazole-4-carboxamide. The protein operates within amino-acid biosynthesis; L-histidine biosynthesis; L-histidine from 5-phospho-alpha-D-ribose 1-diphosphate: step 4/9. In Gemmatimonas aurantiaca (strain DSM 14586 / JCM 11422 / NBRC 100505 / T-27), this protein is 1-(5-phosphoribosyl)-5-[(5-phosphoribosylamino)methylideneamino] imidazole-4-carboxamide isomerase.